The chain runs to 160 residues: Probable prefoldin subunit 5 (160 aa).

It belongs to the prefoldin subunit alpha family. As to quaternary structure, heterohexamer of two PFD-alpha type and four PFD-beta type subunits.

Functionally, binds specifically to cytosolic chaperonin (c-CPN) and transfers target proteins to it. Binds to nascent polypeptide chain and promotes folding in an environment in which there are many competing pathways for nonnative proteins. This chain is Probable prefoldin subunit 5 (pfdn5), found in Dictyostelium discoideum (Social amoeba).